We begin with the raw amino-acid sequence, 998 residues long: Sensor histidine kinase AruS (998 aa).

Disordered regions lie at residues 27-82 (ERRP…HARA), 154-198 (RQAG…LPAG), and 224-245 (RQHP…RQPR). Positions 40–49 (GEAAVRRAGL) are enriched in low complexity. Residues 161–183 (HRLHRPRTTHRHAVRRAPGRRRE) show a composition bias toward basic residues. Helical transmembrane passes span 264 to 284 (VLLF…FFEY) and 395 to 415 (ASLL…SWLF). Residues 417 to 473 (SLVTRHLWRMSEFAGHIAEGDLQQPLRLDKVDRERDEIDAVAAALEDMRQALRTDRR) enclose the HAMP domain. The Histidine kinase domain occupies 513-734 (TMSHEIRTPL…TFWFEIELAL (222 aa)). His-516 carries the phosphohistidine; by autocatalysis modification. Residues 751–869 (EVLLVEDVAL…ELRRALGEVG (119 aa)) form the Response regulatory domain. Asp-800 is modified (4-aspartylphosphate). An HPt domain is found at 894 to 987 (GRHKLAGLLG…RDGAEALRRA (94 aa)). Residue His-933 is modified to Phosphohistidine.

Autophosphorylated. Activation may require a sequential transfer of a phosphate group from a His in the primary transmitter domain, to an Asp in the receiver domain and to a His in the secondary transmitter domain.

It localises to the cell membrane. It catalyses the reaction ATP + protein L-histidine = ADP + protein N-phospho-L-histidine.. Its pathway is amino-acid degradation; L-arginine degradation [regulation]. Its function is as follows. Member of the two-component regulatory system AruS/AruR, which is involved in the regulation of the arginine transaminase (ATA) pathway in response to exogeneous L-arginine. Probably functions as a sensor kinase that phosphorylates AruR. In Pseudomonas aeruginosa (strain ATCC 15692 / DSM 22644 / CIP 104116 / JCM 14847 / LMG 12228 / 1C / PRS 101 / PAO1), this protein is Sensor histidine kinase AruS (aruS).